A 392-amino-acid chain; its full sequence is Phosphoglycerate kinase (392 aa).

Substrate contacts are provided by residues 21–23 (DLN), Arg36, 59–62 (HLGR), Arg113, and Arg146. ATP-binding positions include Lys197, Glu319, and 345 to 348 (GGDT).

This sequence belongs to the phosphoglycerate kinase family. As to quaternary structure, monomer.

It localises to the cytoplasm. The enzyme catalyses (2R)-3-phosphoglycerate + ATP = (2R)-3-phospho-glyceroyl phosphate + ADP. Its pathway is carbohydrate degradation; glycolysis; pyruvate from D-glyceraldehyde 3-phosphate: step 2/5. This chain is Phosphoglycerate kinase, found in Thioalkalivibrio sulfidiphilus (strain HL-EbGR7).